The following is a 3019-amino-acid chain: Genome polyprotein (3019 aa).

Ser-2 bears the N-acetylserine; by host mark. Residues 2–23 form an interaction with STAT1 region; the sequence is STLPKPQRITKRNINRRPQDVK. The tract at residues 2-58 is interaction with EIF2AK2/PKR; sequence STLPKPQRITKRNINRRPQDVKFPGGGQIVGGVYVLPRRGPKLGVRAVRKTSERSQP. The tract at residues 2–59 is interaction with DDX3X; sequence STLPKPQRITKRNINRRPQDVKFPGGGQIVGGVYVLPRRGPKLGVRAVRKTSERSQPR. Residues 2-75 form a disordered region; sequence STLPKPQRIT…PRARRTEGRS (74 aa). The Cytoplasmic portion of the chain corresponds to 2-168; sequence STLPKPQRIT…EDGINFATGN (167 aa). 2 consecutive short sequence motifs (nuclear localization signal) follow at residues 5-13 and 38-43; these read PKPQRITKR and PRRGPK. The residue at position 53 (Ser-53) is a Phosphoserine; by host. 2 short sequence motifs (nuclear localization signal) span residues 58-64 and 66-71; these read PRSRRQP and PRARRT. Positions 58-68 are enriched in basic residues; it reads PRSRRQPIPRA. Phosphoserine; by host is present on residues Ser-99 and Ser-116. An important for endoplasmic reticulum and mitochondrial localization region spans residues 112-152; the sequence is PRRRSRNLGKVIDTLTCGFADLMGYIPLVGAPVGGVARALA. An interaction with APOA2 region spans residues 122 to 173; sequence VIDTLTCGFADLMGYIPLVGAPVGGVARALAHGVRALEDGINFATGNLPGCS. Positions 164–167 are important for lipid droplets localization; that stretch reads FATG. Residues 169 to 189 traverse the membrane as a helical segment; the sequence is LPGCSFSIFLLALLSCLLTPT. The propeptide at 178–191 is ER anchor for the core protein, removed in mature form by host signal peptidase; it reads LLALLSCLLTPTAG. At 190-358 the chain is on the lumenal side; that stretch reads AGLEYRNASG…IGAHWGVMAG (169 aa). N-linked (GlcNAc...) asparagine; by host glycans are attached at residues Asn-196, Asn-209, and Asn-234. The important for fusion stretch occupies residues 265–296; sequence MVGAATLCSALYVGDLCGALFLVGQGFSWRHR. N-linked (GlcNAc...) asparagine; by host glycosylation occurs at Asn-305. The helical transmembrane segment at 359-379 threads the bilayer; it reads VAYYSMQGNWAKVFLVLCLFS. Topologically, residues 380–730 are lumenal; that stretch reads GVDASTTITG…WEFVILIFLL (351 aa). Residues 385–412 are HVR1; sequence TTITGGVAASGAFTITSLFSTGAKQPLH. N-linked (GlcNAc...) (high mannose) asparagine; by host glycans are attached at residues Asn-417, Asn-423, and Asn-430. Cystine bridges form between Cys-429–Cys-553, Cys-452–Cys-459, Cys-487–Cys-495, and Cys-504–Cys-509. An N-linked (GlcNAc...) asparagine; by host glycan is attached at Asn-448. The interval 475–479 is HVR2; the sequence is ANISG. Residue Asn-476 is glycosylated (N-linked (GlcNAc...) asparagine; by host). The tract at residues 481–494 is CD81-binding 1; that stretch reads SSEKPYCWHYAPRP. N-linked (GlcNAc...) asparagine; by host glycosylation is present at Asn-533. The interval 545 to 552 is CD81-binding 2; the sequence is PPTEPWFG. N-linked (GlcNAc...) asparagine; by host glycosylation occurs at Asn-557. Intrachain disulfides connect Cys-565/Cys-570, Cys-586/Cys-590, Cys-602/Cys-625, and Cys-612/Cys-649. N-linked (GlcNAc...) (high mannose) asparagine; by host glycosylation is found at Asn-628 and Asn-650. Cys-657 and Cys-682 are joined by a disulfide. The PKR/eIF2-alpha phosphorylation homology domain (PePHD) stretch occupies residues 665-676; it reads SEMYPLLHSTTE. The helical transmembrane segment at 731-751 threads the bilayer; sequence LADARVCVVLWMMMLISQAEA. Topologically, residues 752 to 762 are lumenal; sequence ALENLIVLNAI. Residues 763-783 form a helical membrane-spanning segment; the sequence is SAAGTHGIWWSLVAFCVAWHV. The Cytoplasmic portion of the chain corresponds to 784–786; the sequence is RGR. Residues 787–808 form a helical membrane-spanning segment; sequence IFPIAVYSIVGLWPLLLLVLML. Over 809 to 818 the chain is Lumenal; sequence PYRAYAWTGT. Residues 819–839 traverse the membrane as a helical segment; it reads DTSTLGAGVLSLFALFTLSPW. Residues 840 to 843 lie on the Cytoplasmic side of the membrane; sequence YKHW. Residues 844–863 traverse the membrane as a helical segment; the sequence is IARLIWWNQYTIARCEAALQ. Topologically, residues 864-886 are lumenal; that stretch reads IWVPPLLARGARDGIILLAGLFY. The helical transmembrane segment at 887-907 threads the bilayer; that stretch reads PALVFDITKLLLAILGPLYIL. The Peptidase C18 domain occupies 908–1031; sequence QASLVRVPYF…DYRSMGWRLL (124 aa). Topologically, residues 908–1662 are cytoplasmic; the sequence is QASLVRVPYF…CMAADLEVAT (755 aa). The segment at 909–1211 is protease NS2-3; the sequence is ASLVRVPYFV…PVESLSAQTR (303 aa). Cys-927 is lipidated: S-palmitoyl cysteine; by host. The interaction with host SCPS1 stretch occupies residues 934-954; that stretch reads TGGKYVQMVLLALARGFNTYL. Residues His-957, Glu-977, and Cys-998 each act as for protease NS2 activity; shared with dimeric partner in the active site. One can recognise a Peptidase S29 domain in the interval 1032–1213; the sequence is APITAHAQQT…ESLSAQTRSP (182 aa). Catalysis depends on charge relay system; for serine protease NS3 activity residues His-1088 and Asp-1112. The Zn(2+) site is built by Cys-1128 and Cys-1130. Ser-1170 serves as the catalytic Charge relay system; for serine protease NS3 activity. Zn(2+) is bound by residues Cys-1176 and His-1180. Residue 1235–1242 participates in ATP binding; it reads APTGSGES. Mg(2+) is bound by residues Ser-1242 and Glu-1322. A DECH box motif is present at residues 1321–1324; sequence DECH. The 178-residue stretch at 1366–1543 folds into the Helicase C-terminal domain; sequence NIEEVALTGE…ELTPSETTVR (178 aa). A disordered region spans residues 1482 to 1505; that stretch reads VPQDAVSRSQRRGRTGRGKSGTYR. Residues 1491 to 1503 are RNA-binding; it reads QRRGRTGRGKSGT. A helical transmembrane segment spans residues 1663-1683; the sequence is SAWVLLGGVMAALTAYCLSVG. Positions 1684 to 1695 are NS3-binding; that stretch reads SVVIVGHLVLGG. Over 1684–1810 the chain is Cytoplasmic; that stretch reads SVVIVGHLVL…SVTSPLTTNQ (127 aa). Residues 1811-1829 form a helical membrane-spanning segment; the sequence is TLLFNIMGGWVASNLAPPP. Topologically, residues 1830–1833 are lumenal; the sequence is ASTA. A helical transmembrane segment spans residues 1834–1854; that stretch reads FVVSGLAGAAVGSIGLGKVLL. A topological domain (cytoplasmic) is located at residue Asp-1855. A helical transmembrane segment spans residues 1856 to 1876; it reads ILAGYGAGVAGALVAFKIMGG. Topologically, residues 1877–1886 are lumenal; sequence EMPSTEDMVN. The chain crosses the membrane as a helical span at residues 1887 to 1907; that stretch reads LLPAILSPGALVVGVICAAIL. Residues 1908–1977 are Cytoplasmic-facing; the sequence is RRHVGPGEGA…WINEDYPTPC (70 aa). Residue Cys-1977 is the site of S-palmitoyl cysteine; by host attachment. The stretch at 1978 to 2007 is an intramembrane region; it reads DGNWLYDIWNWVCTVLADFKLWLGAKILPK. Over 2008-2998 the chain is Cytoplasmic; the sequence is MPGIPFLSCQ…YHSVSRARSR (991 aa). Residues Cys-2016, Cys-2034, Cys-2036, and Cys-2057 each contribute to the Zn(2+) site. The tract at residues 2125–2213 is FKBP8-binding; the sequence is EFFTELDGVR…ASSSASQLSA (89 aa). Residues 2125 to 2337 form a transcriptional activation region; the sequence is EFFTELDGVR…PVPPPRRKRT (213 aa). The segment at 2140–2144 is interaction with non-structural protein 4A; sequence PVCRP. Residues 2191–2225 are disordered; sequence AKRRLDRGSPPSLASSSASQLSAPSRKATCTTHGR. The tract at residues 2194-2446 is interaction with host SKP2; that stretch reads RLDRGSPPSL…ALITPCAAEE (253 aa). Phosphoserine; by host occurs at positions 2199, 2202, 2206, 2209, 2212, and 2215. The span at 2199 to 2215 shows a compositional bias: low complexity; it reads SPPSLASSSASQLSAPS. An ISDR region spans residues 2215–2254; that stretch reads SRKATCTTHGRHPDAELITANLLWRQEMGSNITRVESESK. The interaction with EIF2AK2/PKR stretch occupies residues 2215–2280; sequence SRKATCTTHG…DELSVAAECF (66 aa). Positions 2254–2311 are NS4B-binding; sequence KVVILDSFEPLRACDDEDELSVAAECFKKPPKYPPALPIWARPDYNPPLVEPWKDPDY. The V3 stretch occupies residues 2304 to 2382; sequence EPWKDPDYVP…GTQSGSLTGP (79 aa). Positions 2327–2330 match the SH3-binding motif; the sequence is PPVP. Residues 2332-2340 carry the Nuclear localization signal motif; sequence PRRKRTIVL. Lys-2355 is covalently cross-linked (Glycyl lysine isopeptide (Lys-Gly) (interchain with G-Cter in ubiquitin)). The disordered stretch occupies residues 2356–2417; the sequence is SFPQPTCSAE…PDLSSGSWST (62 aa). Polar residues predominate over residues 2369–2381; it reads TSGVGTQSGSLTG. Phosphoserine; by host is present on residues Ser-2457 and Ser-2470. The region spanning 2642–2760 is the RdRp catalytic domain; that stretch reads PLGFSYDTRC…IAESAGIDED (119 aa). Mg(2+) contacts are provided by Asp-2648, Asp-2746, and Asp-2747. A helical transmembrane segment spans residues 2999 to 3019; sequence HLLLGLLLLTVGVGIFLLPAR.

It belongs to the hepacivirus polyprotein family. As to quaternary structure, homooligomer. Interacts with E1 (via C-terminus). Interacts with the non-structural protein 5A. Interacts (via N-terminus) with host STAT1 (via SH2 domain); this interaction results in decreased STAT1 phosphorylation and ubiquitin-mediated proteasome-dependent STAT1 degradation, leading to decreased IFN-stimulated gene transcription. Interacts with host STAT3; this interaction constitutively activates STAT3. Interacts with host LTBR receptor. Interacts with host TNFRSF1A receptor and possibly induces apoptosis. Interacts with host HNRPK. Interacts with host YWHAE. Interacts with host UBE3A/E6AP. Interacts with host DDX3X. Interacts with host APOA2. Interacts with host RXRA protein. Interacts with host SP110 isoform 3/Sp110b; this interaction sequesters the transcriptional corepressor SP110 away from the nucleus. Interacts with host CREB3 nuclear transcription protein; this interaction triggers cell transformation. Interacts with host ACY3. Interacts with host C1QR1. Interacts with host RBM24; this interaction, which enhances the interaction of the mature core protein with 5'-UTR, may inhibit viral translation and favor replication. Interacts with host EIF2AK2/PKR; this interaction induces the autophosphorylation of EIF2AK2. Part of the viral assembly initiation complex composed of NS2, E1, E2, NS3, NS4A, NS5A and the mature core protein. Forms a heterodimer with envelope glycoprotein E2. Interacts with mature core protein. Interacts with protease NS2. The heterodimer E1/E2 interacts with host CLDN1; this interaction plays a role in viral entry into host cell. Interacts with host SPSB2 (via C-terminus). Part of the viral assembly initiation complex composed of NS2, E1, E2, NS3, NS4A, NS5A and the mature core protein. Interacts with host NEURL3; this interaction prevents E1 binding to glycoprotein E2. In terms of assembly, forms a heterodimer with envelope glycoprotein E1. Interacts with host CD81 and SCARB1 receptors; these interactions play a role in viral entry into host cell. Interacts with host EIF2AK2/PKR; this interaction inhibits EIF2AK2 and probably allows the virus to evade the innate immune response. Interacts with host CD209/DC-SIGN and CLEC4M/DC-SIGNR. Interact with host SPCS1; this interaction is essential for viral particle assembly. Interacts with protease NS2. The heterodimer E1/E2 interacts with host CLDN1; this interaction plays a role in viral entry into host cell. Part of the viral assembly initiation complex composed of NS2, E1, E2, NS3, NS4A, NS5A and the mature core protein. Interacts with host SLC3A2/4F2hc; the interaction may facilitate viral entry into host cell. Interacts with human PLSCR1. As to quaternary structure, homohexamer. Homoheptamer. Interacts with protease NS2. Homodimer. Interacts with host SPCS1; this interaction is essential for viral particle assembly. Interacts with envelope glycoprotein E1. Interacts with envelope glycoprotein E2. Interacts with viroporin p7. Interacts with serine protease/helicase NS3. Part of the replication complex composed of NS2, NS3, NS4A, NS4B, NS5A and the RNA-directed RNA polymerase embedded in an ER-derived membranous web. Part of the viral assembly initiation complex composed of NS2, E1, E2, NS3, NS4A, NS5A and the mature core protein. In terms of assembly, interacts with protease NS2. Interacts with non-structural protein 4A; this interaction stabilizes the folding of NS3 serine protease. NS3-NS4A interaction is essential for NS3 activation and allows membrane anchorage of the latter. NS3/NS4A complex also prevents phosphorylation of host IRF3, thus preventing the establishment of dsRNA induced antiviral state. Interacts with host MAVS; this interaction leads to the cleavage and inhibition of host MAVS. Interacts with host TICAM1; this interaction leads to the cleavage and inhibition of host TICAM1. Interacts with host TANK-binding kinase/TBK1; this interaction results in the inhibition of the association between TBK1 and IRF3, which leads to the inhibition of IRF3 activation. Interacts with host RBM24. Part of the replication complex composed of NS2, NS3, NS4A, NS4B, NS5A and the RNA-directed RNA polymerase embedded in an ER-derived membranous web. Part of the viral assembly initiation complex composed of NS2, E1, E2, NS3, NS4A, NS5A and the mature core protein. As to quaternary structure, interacts with NS3 serine protease; this interaction stabilizes the folding of NS3 serine protease. NS3-NS4A interaction is essential for NS3 activation and allows membrane anchorage of the latter. Interacts with non-structural protein 5A (via N-terminus). Part of the replication complex composed of NS2, NS3, NS4A, NS4B, NS5A and the RNA-directed RNA polymerase embedded in an ER-derived membranous web. Part of the viral assembly initiation complex composed of NS2, E1, E2, NS3, NS4A, NS5A and the mature core protein. Homomultimer. Interacts with non-structural protein NS5A. Interacts with host PLA2G4C; this interaction likely initiates the recruitment of replication complexes to lipid droplets. Interacts with host STING; this interaction disrupts the interaction between STING and TBK1 thereby suppressing the interferon signaling. Part of the replication complex composed of NS2, NS3, NS4A, NS4B, NS5A and the RNA-directed RNA polymerase embedded in an ER-derived membranous web. In terms of assembly, monomer. Homodimer; dimerization is required for RNA-binding. Interacts with the mature core protein. Interacts (via N-terminus) with non-structural protein 4A. Interacts with non-structural protein 4B. Interacts (via region D2) with RNA-directed RNA polymerase. Part of the viral assembly initiation complex composed of NS2, E1, E2, NS3, NS4A, NS5A and the mature core protein. Part of the replication complex composed of NS2, NS3, NS4A, NS4B, NS5A and the RNA-directed RNA polymerase embedded in an ER-derived membranous web. Interacts with host GRB2. Interacts with host BIN1. Interacts with host PIK3R1. Interacts with host SRCAP. Interacts with host FKBP8. Interacts (via C-terminus) with host VAPB (via MSP domain). Interacts with host EIF2AK2/PKR; this interaction leads to disruption of EIF2AK2 dimerization by NS5A and probably allows the virus to evade the innate immune response. Interacts (via N-terminus) with host PACSIN2 (via N-terminus); this interaction attenuates protein kinase C alpha-mediated phosphorylation of PACSIN2 by disrupting the interaction between PACSIN2 and PRKCA. Interacts (via N-terminus) with host SRC kinase (via SH2 domain). Interacts with most Src-family kinases. Interacts with host IFI27 and SKP2; promotes the ubiquitin-mediated proteasomal degradation of NS5A. Interacts with host GPS2. Interacts with host TNFRSF21; this interaction allows the modulation by the virus of JNK, p38 MAPK, STAT3, and Akt signaling pathways in a DR6-dependent manner. Interacts (via N-terminus) with host CIDEB (via N-terminus); this interaction seems to regulate the association of HCV particles with APOE. Interacts with host CHKA/Choline Kinase-alpha; CHKA bridges host PI4KA and NS5A and potentiates NS5A-stimulated PI4KA activity, which then facilitates the targeting of the ternary complex to the ER for viral replication. Interacts with host SPSB2 (via C-terminus); this interaction targets NS5A for ubiquitination and degradation. Interacts with host RAB18; this interaction may promote the association of NS5A and other replicase components with lipid droplets. Interacts (via region D2) with host PPIA/CYPA; the interaction stimulates RNA-binding ability of NS5A and is dependent on the peptidyl-prolyl cis-trans isomerase activity of PPIA/CYPA. Interacts with host TRIM14; this interaction induces the degradation of NS5A. As to quaternary structure, homooligomer. Interacts with non-structural protein 5A. Interacts with host VAPB. Interacts with host PRK2/PKN2. Interacts with host HNRNPA1 and SEPT6; these interactions facilitate viral replication. Part of the replication complex composed of NS2, NS3, NS4A, NS4B, NS5A and the RNA-directed RNA polymerase. It depends on Zn(2+) as a cofactor. The cofactor is Mg(2+). Post-translationally, specific enzymatic cleavages in vivo yield mature proteins. The structural proteins, core, E1, E2 and p7 are produced by proteolytic processing by host signal peptidases. The core protein precursor is synthesized as a 23 kDa, which is retained in the ER membrane through the hydrophobic signal peptide. Cleavage by the signal peptidase releases the 21 kDa mature core protein. The cleavage of the core protein precursor occurs between aminoacids 176 and 188 but the exact cleavage site is not known. Some degraded forms of the core protein appear as well during the course of infection. The other proteins (p7, NS2, NS3, NS4A, NS4B, NS5A and NS5B) are cleaved by the viral proteases. Autoprocessing between NS2 and NS3 is mediated by the NS2 cysteine protease catalytic domain and regulated by the NS3 N-terminal domain. Phosphorylated by host PKC and PKA. In terms of processing, ubiquitinated; mediated by UBE3A and leading to core protein subsequent proteasomal degradation. Post-translationally, highly N-glycosylated. Palmitoylation is required for NS2/3 autoprocessing and E2 recruitment to membranes. In terms of processing, palmitoylated. This modification may play a role in its polymerization or in protein-protein interactions. Post-translationally, phosphorylated on serines in a basal form termed p56. p58 is a hyperphosphorylated form of p56. p56 and p58 coexist in the cell in roughly equivalent amounts. Hyperphosphorylation is dependent on the presence of NS4A. Host CSNK1A1/CKI-alpha or RPS6KB1 kinases may be responsible for NS5A phosphorylation. Tyrosine phosphorylation is essential for the interaction with host SRC. In terms of processing, ubiquitinated. Ubiquitination, most probably at Lys-2355, mediated by host IFI27 and SKP2 leads to proteasomal degradation, restricting viral infection. Ubiquitination by host TRIM22 leads to interruption of viral replication. Post-translationally, the N-terminus is phosphorylated by host PRK2/PKN2.

It is found in the host endoplasmic reticulum membrane. Its subcellular location is the host mitochondrion membrane. The protein localises to the virion. The protein resides in the host cytoplasm. It localises to the host nucleus. It is found in the host lipid droplet. Its subcellular location is the virion membrane. The protein localises to the host mitochondrion. The protein resides in the host cell membrane. It localises to the host perinuclear region. It carries out the reaction Hydrolysis of four peptide bonds in the viral precursor polyprotein, commonly with Asp or Glu in the P6 position, Cys or Thr in P1 and Ser or Ala in P1'.. The catalysed reaction is a ribonucleoside 5'-triphosphate + H2O = a ribonucleoside 5'-diphosphate + phosphate + H(+). It catalyses the reaction ATP + H2O = ADP + phosphate + H(+). The enzyme catalyses RNA(n) + a ribonucleoside 5'-triphosphate = RNA(n+1) + diphosphate. Inhibited by the antiviral drug hexamethylene amiloride. Inhibition by amantadine appears to be genotype-dependent. Also inhibited by long-alkyl-chain iminosugar derivatives. Its activity is regulated as follows. Activity is up-regulated by PRK2/PKN2-mediated phosphorylation. Packages viral RNA to form a viral nucleocapsid, and promotes virion budding. Participates in the viral particle production as a result of its interaction with the non-structural protein 5A. Binds RNA and may function as a RNA chaperone to induce the RNA structural rearrangements taking place during virus replication. Modulates viral translation initiation by interacting with viral IRES and 40S ribosomal subunit. Affects various cell signaling pathways, host immunity and lipid metabolism. Prevents the establishment of cellular antiviral state by blocking the interferon-alpha/beta (IFN-alpha/beta) and IFN-gamma signaling pathways and by blocking the formation of phosphorylated STAT1 and promoting ubiquitin-mediated proteasome-dependent degradation of STAT1. Activates STAT3 leading to cellular transformation. Regulates the activity of cellular genes, including c-myc and c-fos. May repress the promoter of p53, and sequester CREB3 and SP110 isoform 3/Sp110b in the cytoplasm. Represses cell cycle negative regulating factor CDKN1A, thereby interrupting an important check point of normal cell cycle regulation. Targets transcription factors involved in the regulation of inflammatory responses and in the immune response: suppresses TNF-induced NF-kappa-B activation, and activates AP-1. Binds to dendritic cells (DCs) via C1QR1, resulting in down-regulation of T-lymphocytes proliferation. Alters lipid metabolism by interacting with hepatocellular proteins involved in lipid accumulation and storage. Induces up-regulation of FAS promoter activity, and thereby contributes to the increased triglyceride accumulation in hepatocytes (steatosis). Its function is as follows. Forms a heterodimer with envelope glycoprotein E2, which mediates virus attachment to the host cell, virion internalization through clathrin-dependent endocytosis and fusion with host membrane. Fusion with the host cell is most likely mediated by both E1 and E2, through conformational rearrangements of the heterodimer required for fusion rather than a classical class II fusion mechanism. E1/E2 heterodimer binds host apolipoproteins such as APOB and ApoE thereby forming a lipo-viro-particle (LVP). APOE associated to the LVP allows the initial virus attachment to cell surface receptors such as the heparan sulfate proteoglycans (HSPGs), syndecan-1 (SDC1), syndecan-1 (SDC2), the low-density lipoprotein receptor (LDLR) and scavenger receptor class B type I (SCARB1). The cholesterol transfer activity of SCARB1 allows E2 exposure and binding of E2 to SCARB1 and the tetraspanin CD81. E1/E2 heterodimer binding on CD81 activates the epithelial growth factor receptor (EGFR) signaling pathway. Diffusion of the complex E1-E2-EGFR-SCARB1-CD81 to the cell lateral membrane allows further interaction with Claudin 1 (CLDN1) and occludin (OCLN) to finally trigger HCV entry. Functionally, forms a heterodimer with envelope glycoprotein E1, which mediates virus attachment to the host cell, virion internalization through clathrin-dependent endocytosis and fusion with host membrane. Fusion with the host cell is most likely mediated by both E1 and E2, through conformational rearrangements of the heterodimer required for fusion rather than a classical class II fusion mechanism. The interaction between envelope glycoprotein E2 and host apolipoprotein E/APOE allows the proper assembly, maturation and infectivity of the viral particles. This interaction is probably promoted via the up-regulation of cellular autophagy by the virus. E1/E2 heterodimer binds host apolipoproteins such as APOB and APOE thereby forming a lipo-viro-particle (LVP). APOE associated to the LVP allows the initial virus attachment to cell surface receptors such as the heparan sulfate proteoglycans (HSPGs), syndecan-1 (SDC1), syndecan-1 (SDC2), the low-density lipoprotein receptor (LDLR) and scavenger receptor class B type I (SCARB1). The cholesterol transfer activity of SCARB1 allows E2 exposure and binding of E2 to SCARB1 and the tetraspanin CD81. E1/E2 heterodimer binding on CD81 activates the epithelial growth factor receptor (EGFR) signaling pathway. Diffusion of the complex E1-E2-EGFR-SCARB1-CD81 to the cell lateral membrane allows further interaction with Claudin 1 (CLDN1) and occludin (OCLN) to finally trigger HCV entry. Inhibits host EIF2AK2/PKR activation, preventing the establishment of an antiviral state. Viral ligand for CD209/DC-SIGN and CLEC4M/DC-SIGNR, which are respectively found on dendritic cells (DCs), and on liver sinusoidal endothelial cells and macrophage-like cells of lymph node sinuses. These interactions allow the capture of circulating HCV particles by these cells and subsequent facilitated transmission to permissive cells such as hepatocytes and lymphocyte subpopulations. The interaction between E2 and host amino acid transporter complex formed by SLC3A2 and SLC7A5/LAT1 may facilitate viral entry into host cell. In terms of biological role, ion channel protein that acts as a viroporin and plays an essential role in the assembly, envelopment and secretion of viral particles. Regulates the host cell secretory pathway, which induces the intracellular retention of viral glycoproteins and favors assembly of viral particles. Creates a pore in acidic organelles and releases Ca(2+) and H(+) in the cytoplasm of infected cells, leading to a productive viral infection. High levels of cytoplasmic Ca(2+) may trigger membrane trafficking and transport of viral ER-associated proteins to viroplasms, sites of viral genome replication. This ionic imbalance induces the assembly of the inflammasome complex, which triggers the maturation of pro-IL-1beta into IL-1beta through the action of caspase-1. Targets also host mitochondria and induces mitochondrial depolarization. In addition of its role as a viroporin, acts as a lipid raft adhesion factor. Cysteine protease required for the proteolytic auto-cleavage between the non-structural proteins NS2 and NS3. The N-terminus of NS3 is required for the function of NS2 protease (active region NS2-3). Promotes the initiation of viral particle assembly by mediating the interaction between structural and non-structural proteins. Its function is as follows. Displays three enzymatic activities: serine protease with a chymotrypsin-like fold, NTPase and RNA helicase. NS3 serine protease, in association with NS4A, is responsible for the cleavages of NS3-NS4A, NS4A-NS4B, NS4B-NS5A and NS5A-NS5B. The NS3/NS4A complex prevents phosphorylation of host IRF3, thus preventing the establishment of dsRNA induced antiviral state. The NS3/NS4A complex induces host amino acid transporter component SLC3A2, thus contributing to HCV propagation. NS3 RNA helicase binds to RNA and unwinds both dsDNA and dsRNA in the 3' to 5' direction, and likely resolves RNA complicated stable secondary structures in the template strand. Binds a single ATP and catalyzes the unzipping of a single base pair of dsRNA. Inhibits host antiviral proteins TBK1 and IRF3 thereby preventing the establishment of an antiviral state. Cleaves host MAVS/CARDIF thereby preventing the establishment of an antiviral state. Cleaves host TICAM1/TRIF, thereby disrupting TLR3 signaling and preventing the establishment of an antiviral state. Functionally, induces a specific membrane alteration that serves as a scaffold for the virus replication complex. This membrane alteration gives rise to the so-called ER-derived membranous web that contains the replication complex. NS4B self-interaction contributes to its function in membranous web formation. Promotes host TRIF protein degradation in a CASP8-dependent manner thereby inhibiting host TLR3-mediated interferon signaling. Disrupts the interaction between STING and TBK1 contributing to the inhibition of interferon signaling. In terms of biological role, phosphorylated protein that is indispensable for viral replication and assembly. Both hypo- and hyperphosphorylated states are required for the viral life cycle. The hyperphosphorylated form of NS5A is an inhibitor of viral replication. Involved in RNA-binding and especially in binding to the viral genome. Zinc is essential for RNA-binding. Participates in the viral particle production as a result of its interaction with the mature viral core protein. Its interaction with host VAPB may target the viral replication complex to vesicles. Down-regulates viral IRES translation initiation. Mediates interferon resistance, presumably by interacting with and inhibiting host EIF2AK2/PKR. Prevents BIN1-induced apoptosis. Acts as a transcriptional activator of some host genes important for viral replication when localized in the nucleus. Via the interaction with host PACSIN2, modulates lipid droplet formation in order to promote virion assembly. Modulates TNFRSF21/DR6 signaling pathway for viral propagation. RNA-dependent RNA polymerase that performs primer-template recognition and RNA synthesis during viral replication. Initiates RNA transcription/replication at a flavin adenine dinucleotide (FAD), resulting in a 5'- FAD cap on viral RNAs. In this way, recognition of viral 5' RNA by host pattern recognition receptors can be bypassed, thereby evading activation of antiviral pathways. The chain is Genome polyprotein from Homo sapiens (Human).